The sequence spans 782 residues: U-box domain-containing protein 7 (782 aa).

The U-box domain maps to 271-345 (VPPEELRCPI…ASWCEQNGTQ (75 aa)). 5 ARM repeats span residues 456 to 499 (EEAR…NLAV), 502 to 541 (NRNK…SCLD), 542 to 581 (EAKS…NLST), 583 to 623 (SPNI…NLAS), and 626 to 665 (EGKD…ILCN). Residues 707 to 729 (EERQQRDQPSSNRDEPPQKEPAR) are compositionally biased toward basic and acidic residues. Residues 707–765 (EERQQRDQPSSNRDEPPQKEPARKSLSAPLSVHGSTPASASVQDYEPRVLSKSMSRRKS) are disordered. Residues 739-748 (HGSTPASASV) are compositionally biased toward polar residues.

The catalysed reaction is S-ubiquitinyl-[E2 ubiquitin-conjugating enzyme]-L-cysteine + [acceptor protein]-L-lysine = [E2 ubiquitin-conjugating enzyme]-L-cysteine + N(6)-ubiquitinyl-[acceptor protein]-L-lysine.. Its pathway is protein modification; protein ubiquitination. Functionally, functions as an E3 ubiquitin ligase. The polypeptide is U-box domain-containing protein 7 (PUB7) (Arabidopsis thaliana (Mouse-ear cress)).